The chain runs to 336 residues: F420-dependent glucose-6-phosphate dehydrogenase (336 aa).

Residue D39 participates in coenzyme F420-(gamma-Glu)n binding. H40 acts as the Proton donor in catalysis. Residues T76 and 107–108 each bind coenzyme F420-(gamma-Glu)n; that span reads TG. The Proton acceptor role is filled by E109. Coenzyme F420-(gamma-Glu)n is bound by residues N112, 177–178, and 180–181; these read GG and VV. T195, K198, K259, and R283 together coordinate substrate.

This sequence belongs to the F420-dependent glucose-6-phosphate dehydrogenase family. In terms of assembly, homodimer.

The catalysed reaction is oxidized coenzyme F420-(gamma-L-Glu)(n) + D-glucose 6-phosphate + H(+) = 6-phospho-D-glucono-1,5-lactone + reduced coenzyme F420-(gamma-L-Glu)(n). Functionally, catalyzes the coenzyme F420-dependent oxidation of glucose 6-phosphate (G6P) to 6-phosphogluconolactone. Appears to have a role in resistance to oxidative stress, via its consumption of G6P that serves as a source of reducing power to combat oxidative stress in mycobacteria. This Mycolicibacterium fortuitum (Mycobacterium fortuitum) protein is F420-dependent glucose-6-phosphate dehydrogenase.